Consider the following 182-residue polypeptide: tRNA-splicing endonuclease (182 aa).

Active-site residues include Tyr-119, His-127, and Lys-158.

It belongs to the tRNA-intron endonuclease family. Archaeal short subfamily. In terms of assembly, homotetramer; although the tetramer contains four active sites, only two participate in the cleavage. Therefore, it should be considered as a dimer of dimers.

The catalysed reaction is pretRNA = a 3'-half-tRNA molecule with a 5'-OH end + a 5'-half-tRNA molecule with a 2',3'-cyclic phosphate end + an intron with a 2',3'-cyclic phosphate and a 5'-hydroxyl terminus.. Functionally, endonuclease that removes tRNA introns. Cleaves pre-tRNA at the 5'- and 3'-splice sites to release the intron. The products are an intron and two tRNA half-molecules bearing 2',3' cyclic phosphate and 5'-OH termini. Recognizes a pseudosymmetric substrate in which 2 bulged loops of 3 bases are separated by a stem of 4 bp. In Saccharolobus islandicus (strain L.S.2.15 / Lassen #1) (Sulfolobus islandicus), this protein is tRNA-splicing endonuclease.